The sequence spans 177 residues: UPF0200 protein STK_09500 (177 aa).

Position 11-18 (11-18 (GMPGSGKG)) interacts with ATP.

It belongs to the UPF0200 family.

The protein is UPF0200 protein STK_09500 of Sulfurisphaera tokodaii (strain DSM 16993 / JCM 10545 / NBRC 100140 / 7) (Sulfolobus tokodaii).